The chain runs to 294 residues: N-acetylmuramic acid 6-phosphate etherase (294 aa).

The 164-residue stretch at 54–217 (VIKSFEEEGR…STASMIGVGK (164 aa)) folds into the SIS domain. Glutamate 82 (proton donor) is an active-site residue. The active site involves glutamate 113.

It belongs to the GCKR-like family. MurNAc-6-P etherase subfamily. As to quaternary structure, homodimer.

It carries out the reaction N-acetyl-D-muramate 6-phosphate + H2O = N-acetyl-D-glucosamine 6-phosphate + (R)-lactate. It functions in the pathway amino-sugar metabolism; N-acetylmuramate degradation. In terms of biological role, specifically catalyzes the cleavage of the D-lactyl ether substituent of MurNAc 6-phosphate, producing GlcNAc 6-phosphate and D-lactate. The sequence is that of N-acetylmuramic acid 6-phosphate etherase from Bacillus cereus (strain ATCC 14579 / DSM 31 / CCUG 7414 / JCM 2152 / NBRC 15305 / NCIMB 9373 / NCTC 2599 / NRRL B-3711).